We begin with the raw amino-acid sequence, 162 residues long: Podoplanin (162 aa).

The first 22 residues, 1–22 (MWKVSALLFVLGSASLWVLAEG), serve as a signal peptide directing secretion. Positions 23–57 (ASTGQPEDDTETTGLEGGVAMPGAEDDVVTPGTSE) are disordered. Residues 23-131 (ASTGQPEDDT…EKDGLSTVTL (109 aa)) lie on the Extracellular side of the membrane. 10 O-linked (GalNAc...) threonine glycosylation sites follow: T25, T32, T34, T35, T52, T55, T65, T66, T76, and T85. Polar residues predominate over residues 85 to 108 (TSESTVHAQEQSPSATASNVATSH). The segment at 85-119 (TSESTVHAQEQSPSATASNVATSHSTEKVDGDTQT) is disordered. O-linked (GalNAc...) serine glycosylation is found at S86 and S88. An O-linked (GalNAc...) threonine glycan is attached at T89. Residues S96 and S98 are each glycosylated (O-linked (GalNAc...) serine). An O-linked (GalNAc...) threonine glycan is attached at T100. The O-linked (GalNAc...) serine glycan is linked to S102. T106 is a glycosylation site (O-linked (GalNAc...) threonine). S107 and S109 each carry an O-linked (GalNAc...) serine glycan. A compositionally biased stretch (basic and acidic residues) spans 109–119 (STEKVDGDTQT). 4 O-linked (GalNAc...) threonine glycosylation sites follow: T110, T117, T119, and T120. The helical transmembrane segment at 132-152 (VGIIVGVLLAIGFIGAIIVVV) threads the bilayer. The tract at residues 133–137 (GIIVG) is requires for dimerization and lipid rafts association. Residues 153-162 (MRKMSGRYSP) lie on the Cytoplasmic side of the membrane. The segment at 154–155 (RK) is requires for interaction with MSN and EZR.

The protein belongs to the podoplanin family. As to quaternary structure, homodimer. Interacts with CLEC1B; the interaction is independent of CLEC1B glycosylation and activates CLEC1B; the interaction is dependent of sialic acid on O-glycans. Interacts with CD9; this interaction is homophilic and attenuates platelet aggregation and pulmonary metastasis induced by PDPN. Interacts with LGALS8; the interaction is glycosylation-dependent; may participate in connection of the lymphatic endothelium to the surrounding extracellular matrix. Interacts with HSPA9. Interacts (via extracellular domain) with CD44; this interaction is required for PDPN-mediated directional migration and regulation of lamellipodia extension/stabilization during cell spreading and migration. Interacts (via cytoplasmic domain) with MSN and EZR; activates RHOA and promotes epithelial-mesenchymal transition. Interacts with CCL21; relocalized PDPN to the basolateral membrane. In terms of processing, extensively O-glycosylated. Contains sialic acid residues. O-glycosylation is necessary for platelet aggregation activity. Disialylated at Thr-52; sialic acid is critical for platelet-aggregating activity and for CLEC1B interaction. Post-translationally, the N-terminus is blocked. Cleaved by a metalloprotease within its extracellular (EC) domain, generating a membrane-bound C-terminal fragment (PCTF33) and an extracellular fragment. The resulting membrane-bound C-terminal fragment (PCTF33) is further processed between Val-150 and Val-151 by PSEN1/gamma-secretase generating the intracellular domain of podoplanin (PICD). Highly expressed in placenta, lung, skeletal muscle and brain. Weakly expressed in brain, kidney and liver. In placenta, expressed on the apical plasma membrane of endothelium. In lung, expressed in alveolar epithelium. Up-regulated in colorectal tumors and expressed in 25% of early oral squamous cell carcinomas.

It localises to the membrane. The protein resides in the cell projection. It is found in the lamellipodium membrane. The protein localises to the filopodium membrane. Its subcellular location is the microvillus membrane. It localises to the ruffle membrane. The protein resides in the membrane raft. It is found in the apical cell membrane. The protein localises to the basolateral cell membrane. Its subcellular location is the invadopodium. It localises to the cytoplasm. The protein resides in the cytosol. In terms of biological role, mediates effects on cell migration and adhesion through its different partners. During development plays a role in blood and lymphatic vessels separation by binding CLEC1B, triggering CLEC1B activation in platelets and leading to platelet activation and/or aggregation. Interaction with CD9, on the contrary, attenuates platelet aggregation induced by PDPN. Through MSN or EZR interaction promotes epithelial-mesenchymal transition (EMT) leading to ERZ phosphorylation and triggering RHOA activation leading to cell migration increase and invasiveness. Interaction with CD44 promotes directional cell migration in epithelial and tumor cells. In lymph nodes (LNs), controls fibroblastic reticular cells (FRCs) adhesion to the extracellular matrix (ECM) and contraction of the actomyosin by maintaining ERM proteins (EZR; MSN and RDX) and MYL9 activation through association with unknown transmembrane proteins. Engagement of CLEC1B by PDPN promotes FRCs relaxation by blocking lateral membrane interactions leading to reduction of ERM proteins (EZR; MSN and RDX) and MYL9 activation. Through binding with LGALS8 may participate in connection of the lymphatic endothelium to the surrounding extracellular matrix. In keratinocytes, induces changes in cell morphology showing an elongated shape, numerous membrane protrusions, major reorganization of the actin cytoskeleton, increased motility and decreased cell adhesion. Controls invadopodia stability and maturation leading to efficient degradation of the extracellular matrix (ECM) in tumor cells through modulation of RHOC activity in order to activate ROCK1/ROCK2 and LIMK1/LIMK2 and inactivation of CFL1. Required for normal lung cell proliferation and alveolus formation at birth. Does not function as a water channel or as a regulator of aquaporin-type water channels. Does not have any effect on folic acid or amino acid transport. The polypeptide is Podoplanin (Homo sapiens (Human)).